The following is a 342-amino-acid chain: Dihydroorotase (342 aa).

Residues histidine 13 and histidine 15 each coordinate Zn(2+). Residues 15–17 and asparagine 41 contribute to the substrate site; that span reads HLR. Residues lysine 98, histidine 135, and histidine 173 each contribute to the Zn(2+) site. The residue at position 98 (lysine 98) is an N6-carboxylysine. Residue histidine 135 participates in substrate binding. Residue leucine 218 participates in substrate binding. A Zn(2+)-binding site is contributed by aspartate 246. Residue aspartate 246 is part of the active site. Substrate is bound by residues histidine 250 and alanine 262.

The protein belongs to the metallo-dependent hydrolases superfamily. DHOase family. Class II DHOase subfamily. As to quaternary structure, homodimer. The cofactor is Zn(2+).

The enzyme catalyses (S)-dihydroorotate + H2O = N-carbamoyl-L-aspartate + H(+). It participates in pyrimidine metabolism; UMP biosynthesis via de novo pathway; (S)-dihydroorotate from bicarbonate: step 3/3. Functionally, catalyzes the reversible cyclization of carbamoyl aspartate to dihydroorotate. The sequence is that of Dihydroorotase from Vibrio parahaemolyticus serotype O3:K6 (strain RIMD 2210633).